The primary structure comprises 347 residues: Anthranilate phosphoribosyltransferase (347 aa).

5-phospho-alpha-D-ribose 1-diphosphate is bound by residues glycine 82, 85-86, threonine 90, 92-95, 110-118, and threonine 122; these read GD, NIST, and KHGNRAITS. An anthranilate-binding site is contributed by glycine 82. Serine 94 is a binding site for Mg(2+). Position 113 (asparagine 113) interacts with anthranilate. Arginine 168 serves as a coordination point for anthranilate. Residues aspartate 226 and glutamate 227 each contribute to the Mg(2+) site.

Belongs to the anthranilate phosphoribosyltransferase family. As to quaternary structure, homodimer. It depends on Mg(2+) as a cofactor.

The catalysed reaction is N-(5-phospho-beta-D-ribosyl)anthranilate + diphosphate = 5-phospho-alpha-D-ribose 1-diphosphate + anthranilate. It functions in the pathway amino-acid biosynthesis; L-tryptophan biosynthesis; L-tryptophan from chorismate: step 2/5. Its function is as follows. Catalyzes the transfer of the phosphoribosyl group of 5-phosphorylribose-1-pyrophosphate (PRPP) to anthranilate to yield N-(5'-phosphoribosyl)-anthranilate (PRA). The protein is Anthranilate phosphoribosyltransferase of Caulobacter sp. (strain K31).